Consider the following 331-residue polypeptide: GTP 3',8-cyclase (331 aa).

Residues 6 to 231 enclose the Radical SAM core domain; that stretch reads PFGRTISYLR…TDIPFKTGGP (226 aa). Arg15 provides a ligand contact to GTP. [4Fe-4S] cluster is bound by residues Cys22 and Cys26. Residue Tyr28 coordinates S-adenosyl-L-methionine. Cys29 is a [4Fe-4S] cluster binding site. Residue Arg64 coordinates GTP. An S-adenosyl-L-methionine-binding site is contributed by Gly68. Thr98 provides a ligand contact to GTP. Ser122 contributes to the S-adenosyl-L-methionine binding site. Lys158 contributes to the GTP binding site. Met192 lines the S-adenosyl-L-methionine pocket. The [4Fe-4S] cluster site is built by Cys255 and Cys258. GTP is bound at residue 260-262; sequence RVR. Cys272 contacts [4Fe-4S] cluster.

This sequence belongs to the radical SAM superfamily. MoaA family. As to quaternary structure, monomer and homodimer. Requires [4Fe-4S] cluster as cofactor.

It carries out the reaction GTP + AH2 + S-adenosyl-L-methionine = (8S)-3',8-cyclo-7,8-dihydroguanosine 5'-triphosphate + 5'-deoxyadenosine + L-methionine + A + H(+). Its pathway is cofactor biosynthesis; molybdopterin biosynthesis. Catalyzes the cyclization of GTP to (8S)-3',8-cyclo-7,8-dihydroguanosine 5'-triphosphate. This is GTP 3',8-cyclase from Mesorhizobium japonicum (strain LMG 29417 / CECT 9101 / MAFF 303099) (Mesorhizobium loti (strain MAFF 303099)).